We begin with the raw amino-acid sequence, 718 residues long: Quinohemoprotein alcohol dehydrogenase ADH-IIG (718 aa).

Residues 1 to 29 (MRQTGLASLPLKSLAVAVLLSLAGTPALA) form the signal peptide. E92 contacts pyrroloquinoline quinone. Cysteines 138 and 139 form a disulfide. Residues R144, T189, and 205–206 (GA) contribute to the pyrroloquinoline quinone site. E207 is a Ca(2+) binding site. T264 provides a ligand contact to pyrroloquinoline quinone. The Ca(2+) site is built by N284 and D329. D329 functions as the Proton acceptor in the catalytic mechanism. K356 serves as a coordination point for pyrroloquinoline quinone. Residue W415 participates in substrate binding. Residues 419-420 (DW) and A571 contribute to the pyrroloquinoline quinone site. Residues 622–699 (ASIEAGAKLY…QIHQYLIKRA (78 aa)) form the Cytochrome c domain. Heme c is bound by residues C635, C638, H639, and M676.

This sequence belongs to the bacterial PQQ dehydrogenase family. In terms of assembly, monomer. Pyrroloquinoline quinone is required as a cofactor. It depends on Ca(2+) as a cofactor. Requires heme c as cofactor.

The protein resides in the periplasm. The enzyme catalyses 2 oxidized [azurin] + a primary alcohol = 2 reduced [azurin] + an aldehyde + 2 H(+). Its activity is regulated as follows. Exhibits higher affinity for 1-butanol compared to 1,2-propanediol but inhibited by 10 mM 1-butanol. In terms of biological role, catalyzes the dye-linked oxidation of primary alcohols to the corresponding aldehydes and the (subsequent) oxidation of the aldehydes to carboxylic acids. Active with primary alcohols, glycerol, 1,2-propanediol, 1,3-propanediol but not with methanol or sugar alcohols such as D-sorbitol. This is Quinohemoprotein alcohol dehydrogenase ADH-IIG from Pseudomonas putida (Arthrobacter siderocapsulatus).